The following is a 162-amino-acid chain: Large ribosomal subunit protein uL30 (162 aa).

Belongs to the universal ribosomal protein uL30 family. Part of the 50S ribosomal subunit.

This chain is Large ribosomal subunit protein uL30, found in Desulfurococcus amylolyticus (strain DSM 18924 / JCM 16383 / VKM B-2413 / 1221n) (Desulfurococcus kamchatkensis).